A 488-amino-acid chain; its full sequence is Transmembrane protein 39A-B (488 aa).

Residues Asn31 and Asn39 are each glycosylated (N-linked (GlcNAc...) asparagine). The next 3 helical transmembrane spans lie at 72–92, 110–130, and 155–175; these read GLVF…TQYI, TSLN…VMLA, and LIIG…WTTV. Asn180 carries N-linked (GlcNAc...) asparagine glycosylation. The chain crosses the membrane as a helical span at residues 182–202; the sequence is SVLNLLFLGYPFGVYVPLCCF. A glycan (N-linked (GlcNAc...) asparagine) is linked at Asn206. The next 4 helical transmembrane spans lie at 287-307, 319-339, 420-440, and 446-466; these read EVLF…LCFV, CEHL…QLLP, LLNL…YSLL, and NHTL…FKLL.

It belongs to the TMEM39 family.

Its subcellular location is the membrane. This Xenopus laevis (African clawed frog) protein is Transmembrane protein 39A-B (tmem39a-b).